The sequence spans 341 residues: Terpene synthase 9 (341 aa).

Residues 81 to 86 carry the DDxx(x)D/E motif motif; it reads DDILDS. The NDxxSxxxD/E motif signature appears at 222–230; it reads NDMASYCKE.

The protein belongs to the terpene synthase family.

It catalyses the reaction (2E,6E)-farnesyl diphosphate = (1S,2S,4R)-beta-elemene + diphosphate. The catalysed reaction is (2E,6E)-farnesyl diphosphate = germacrene D + diphosphate. Terpene synthase that converts its substrate farnesyl diphosphate (FPP) into the sesquiterpenes beta-elemene, germacrene D and a yet unidentified sesquiterpene. This is Terpene synthase 9 from Dictyostelium purpureum (Slime mold).